The following is a 114-amino-acid chain: MVDQNPKRSGEPPVWLMFGAGGTVSAIFLPVVILIIGLLLPFGLVDVHNLITFAYSWIGKLVILVLTIFPMWCGLHRIHHGMHDLKVHVPAGGFIFYGLATIYTVWVLFAVINL.

A run of 3 helical transmembrane segments spans residues 24-44 (VSAI…PFGL), 50-70 (LITF…TIFP), and 92-112 (GGFI…FAVI).

The protein belongs to the FrdD family. In terms of assembly, part of an enzyme complex containing four subunits: a flavoprotein (FrdA), an iron-sulfur protein (FrdB), and two hydrophobic anchor proteins (FrdC and FrdD).

It localises to the cell inner membrane. Its function is as follows. Anchors the catalytic components of the fumarate reductase complex to the cell membrane, binds quinones. In Haemophilus influenzae (strain ATCC 51907 / DSM 11121 / KW20 / Rd), this protein is Fumarate reductase subunit D.